Consider the following 261-residue polypeptide: Hemin import ATP-binding protein HmuV (261 aa).

The ABC transporter domain maps to 5–241 (YTAENLTFTR…DALAHWYGAQ (237 aa)). Position 37 to 44 (37 to 44 (GPNGAGKS)) interacts with ATP.

The protein belongs to the ABC transporter superfamily. Heme (hemin) importer (TC 3.A.1.14.5) family. In terms of assembly, the complex is composed of two ATP-binding proteins (HmuV), two transmembrane proteins (HmuU) and a solute-binding protein (HmuT).

It localises to the cell inner membrane. Functionally, part of the ABC transporter complex HmuTUV involved in hemin import. Responsible for energy coupling to the transport system. The protein is Hemin import ATP-binding protein HmuV of Enterobacter cloacae.